The sequence spans 680 residues: Forkhead box protein P4 (680 aa).

The segment covering 1–17 (MMVESASETIRSAPSGQ) has biased composition (polar residues). Residues 1 to 56 (MMVESASETIRSAPSGQNGVGSLSGQADGSSGGATGTTASGTGREVTTGADSNGEM) are disordered. A phosphoserine mark is found at Ser52 and Ser86. Residues Lys175 and Lys246 each participate in a glycyl lysine isopeptide (Lys-Gly) (interchain with G-Cter in SUMO2) cross-link. The disordered stretch occupies residues 262-306 (FAAPPKVSPPLSHHTLPNGQPTVLTSRRDSSSHEETPGSHPLYGH). A compositionally biased stretch (polar residues) spans 276–286 (TLPNGQPTVLT). Positions 287–298 (SRRDSSSHEETP) are enriched in basic and acidic residues. Residues 307-332 (GECKWPGCETLCEDLGQFIKHLNTEH) form a C2H2-type zinc finger. Residues 349–370 (VQQLEIQLAKESERLQAMMAHL) form a leucine-zipper region. Residue Lys378 forms a Glycyl lysine isopeptide (Lys-Gly) (interchain with G-Cter in SUMO2) linkage. The disordered stretch occupies residues 407–445 (GLVHPPTSAAAPVTPLRPPGLGSASLHGGGPARRRSSDK). The segment at residues 467–559 (RPPFTYASLI…KMTGSPTLVK (93 aa)) is a DNA-binding region (fork-head). Ser554 carries the phosphoserine modification. Residues 602–680 (PLSHDDVGAP…EEELPGEELS (79 aa)) are disordered. Over residues 617-635 (SNGSSSPPRLSPPQYSHQV) the composition is skewed to polar residues. Acidic residues predominate over residues 668–680 (RDLEEELPGEELS).

In terms of assembly, forms homodimers and heterodimers with FOXP1 and FOXP2. Dimerization is required for DNA-binding.

It localises to the nucleus. Its function is as follows. Transcriptional repressor that represses lung-specific expression. The chain is Forkhead box protein P4 (FOXP4) from Homo sapiens (Human).